A 530-amino-acid polypeptide reads, in one-letter code: Berberine bridge enzyme-like 22 (530 aa).

Positions 1–22 (MRELFMYLFLLFLVLCVKSVYS) are cleaved as a signal peptide. A disulfide bridge links Cys-32 with Cys-99. N-linked (GlcNAc...) asparagine glycans are attached at residues Asn-39, Asn-47, Asn-68, Asn-75, Asn-141, and Asn-486. The FAD-binding PCMH-type domain maps to 77-251 (TSLKPILIVK…LSWKVKLARV (175 aa)). The 6-(S-cysteinyl)-8alpha-(pros-histidyl)-FAD (His-Cys) cross-link spans 114–176 (HDYEGLSYLS…KIHAFAAGIC (63 aa)).

It belongs to the oxygen-dependent FAD-linked oxidoreductase family. The cofactor is FAD. In terms of processing, the FAD cofactor is bound via a bicovalent 6-S-cysteinyl, 8alpha-N1-histidyl FAD linkage. In terms of tissue distribution, accumulates in cell walls of etiolated hypocotyls.

The protein resides in the secreted. The protein localises to the cell wall. This is Berberine bridge enzyme-like 22 from Arabidopsis thaliana (Mouse-ear cress).